The primary structure comprises 2241 residues: Large tegument protein deneddylase (2241 aa).

The deubiquitination activity stretch occupies residues 1 to 238 (MKVTQASCHQ…IDLTGVVRES (238 aa)). One can recognise a Peptidase C76 domain in the interval 4 to 226 (TQASCHQGDI…AARLVSTYRD (223 aa)). Active-site residues include C24, D160, and H162. The segment at 239–314 (ADTAATTTTA…STTSKTLATA (76 aa)) is disordered. Over residues 240–250 (DTAATTTTAAP) the composition is skewed to low complexity. Residues 251–268 (SLPPLPDPIVDPGCPPGV) show a composition bias toward pro residues. Low complexity predominate over residues 304–314 (PSTTSKTLATA). The tract at residues 327–331 (SSAVP) is interaction with inner tegument protein. Disordered regions lie at residues 1187 to 1230 (MTET…PPAD) and 2118 to 2152 (PIAR…DTSR). Basic and acidic residues-rich tracts occupy residues 1190 to 1199 (TSERLDRSLR) and 2142 to 2152 (QIDHAQDDTSR).

The protein belongs to the herpesviridae large tegument protein family. As to quaternary structure, interacts with host CUL1 and CUL4A; these interactions inhibit the E3 ligase activity of cullins. Interacts with inner tegument protein. Interacts with capsid vertex specific component CVC2. Interacts with the major capsid protein/MCP.

The protein localises to the virion tegument. Its subcellular location is the host cytoplasm. The protein resides in the host nucleus. The enzyme catalyses Thiol-dependent hydrolysis of ester, thioester, amide, peptide and isopeptide bonds formed by the C-terminal Gly of ubiquitin (a 76-residue protein attached to proteins as an intracellular targeting signal).. In terms of biological role, large tegument protein that plays multiple roles in the viral cycle. During viral entry, remains associated with the capsid while most of the tegument is detached and participates in the capsid transport toward the host nucleus. Plays a role in the routing of the capsid at the nuclear pore complex and subsequent uncoating. Within the host nucleus, acts as a deneddylase and promotes the degradation of nuclear CRLs (cullin-RING ubiquitin ligases) and thereby stabilizes nuclear CRL substrates, while cytoplasmic CRLs remain unaffected. These modifications prevent host cell cycle S-phase progression and create a favorable environment allowing efficient viral genome replication. Participates later in the secondary envelopment of capsids. Indeed, plays a linker role for the association of the outer viral tegument to the capsids together with the inner tegument protein. This is Large tegument protein deneddylase (UL48) from Homo sapiens (Human).